Consider the following 873-residue polypeptide: Valine--tRNA ligase (873 aa).

The short motif at 46–56 is the 'HIGH' region element; the sequence is PNVTGKLHIGH. The 'KMSKS' region motif lies at 525–529; that stretch reads KMSKS. Residue Lys-528 participates in ATP binding. Residues 804–873 are a coiled coil; it reads NDDFIDKEKM…ELIQDKLNKM (70 aa).

This sequence belongs to the class-I aminoacyl-tRNA synthetase family. ValS type 1 subfamily. As to quaternary structure, monomer.

The protein localises to the cytoplasm. The enzyme catalyses tRNA(Val) + L-valine + ATP = L-valyl-tRNA(Val) + AMP + diphosphate. Its function is as follows. Catalyzes the attachment of valine to tRNA(Val). As ValRS can inadvertently accommodate and process structurally similar amino acids such as threonine, to avoid such errors, it has a 'posttransfer' editing activity that hydrolyzes mischarged Thr-tRNA(Val) in a tRNA-dependent manner. This Mesoplasma florum (strain ATCC 33453 / NBRC 100688 / NCTC 11704 / L1) (Acholeplasma florum) protein is Valine--tRNA ligase.